The sequence spans 84 residues: Small ribosomal subunit protein uS17c (84 aa).

It belongs to the universal ribosomal protein uS17 family. Part of the 30S ribosomal subunit.

Its subcellular location is the plastid. The protein localises to the chloroplast. Its function is as follows. One of the primary rRNA binding proteins, it binds specifically to the 5'-end of 16S ribosomal RNA. The chain is Small ribosomal subunit protein uS17c (rps17) from Trieres chinensis (Marine centric diatom).